The following is a 232-amino-acid chain: Ribose-5-phosphate isomerase A (232 aa).

Substrate is bound by residues 28-31 (TGST), 83-86 (DGAD), and 96-99 (KGGG). The Proton acceptor role is filled by glutamate 105. Lysine 123 lines the substrate pocket.

This sequence belongs to the ribose 5-phosphate isomerase family. Homodimer.

The enzyme catalyses aldehydo-D-ribose 5-phosphate = D-ribulose 5-phosphate. It functions in the pathway carbohydrate degradation; pentose phosphate pathway; D-ribose 5-phosphate from D-ribulose 5-phosphate (non-oxidative stage): step 1/1. In terms of biological role, catalyzes the reversible conversion of ribose-5-phosphate to ribulose 5-phosphate. The sequence is that of Ribose-5-phosphate isomerase A from Rhizobium leguminosarum bv. trifolii (strain WSM2304).